The primary structure comprises 336 residues: tRNA-cytidine(32) 2-sulfurtransferase (336 aa).

Positions 1–34 (MNAPEILNGAATASPADATEATQTAARAKTPLTR) are disordered. Over residues 10-22 (AATASPADATEAT) the composition is skewed to low complexity. A PP-loop motif motif is present at residues 75-80 (SGGKDS). [4Fe-4S] cluster is bound by residues Cys150, Cys153, and Cys241.

Belongs to the TtcA family. In terms of assembly, homodimer. Mg(2+) serves as cofactor. It depends on [4Fe-4S] cluster as a cofactor.

The protein localises to the cytoplasm. The catalysed reaction is cytidine(32) in tRNA + S-sulfanyl-L-cysteinyl-[cysteine desulfurase] + AH2 + ATP = 2-thiocytidine(32) in tRNA + L-cysteinyl-[cysteine desulfurase] + A + AMP + diphosphate + H(+). Its pathway is tRNA modification. Its function is as follows. Catalyzes the ATP-dependent 2-thiolation of cytidine in position 32 of tRNA, to form 2-thiocytidine (s(2)C32). The sulfur atoms are provided by the cysteine/cysteine desulfurase (IscS) system. This Paraburkholderia phytofirmans (strain DSM 17436 / LMG 22146 / PsJN) (Burkholderia phytofirmans) protein is tRNA-cytidine(32) 2-sulfurtransferase.